The sequence spans 99 residues: MENNNIMSQVKEIIEAAIKELEDDGFEPDIILAGPIFIRYLPEDVRLKVYEIEELGSDAIIADSKYLGQIKKAAKRISIDPLLQEKEWEKIIEEIPTQE.

Belongs to the encapsulin family. Family 4B subfamily. In terms of assembly, may self-assemble into facets and potentially into larger complexes.

Its subcellular location is the encapsulin nanocompartment. May be the encapsulin shell protein in a type 4 A-domain encapsulin nanocompartment system. Its cargo may be upstream glyceraldehyde-3-phosphate dehydrogenase (AC P61879). The polypeptide is Putative type 4B encapsulin shell protein PF1875 (Pyrococcus furiosus (strain ATCC 43587 / DSM 3638 / JCM 8422 / Vc1)).